The primary structure comprises 346 residues: Histidinol-phosphate aminotransferase (346 aa).

Lys209 carries the N6-(pyridoxal phosphate)lysine modification.

Belongs to the class-II pyridoxal-phosphate-dependent aminotransferase family. Histidinol-phosphate aminotransferase subfamily. As to quaternary structure, homodimer. Requires pyridoxal 5'-phosphate as cofactor.

The enzyme catalyses L-histidinol phosphate + 2-oxoglutarate = 3-(imidazol-4-yl)-2-oxopropyl phosphate + L-glutamate. It participates in amino-acid biosynthesis; L-histidine biosynthesis; L-histidine from 5-phospho-alpha-D-ribose 1-diphosphate: step 7/9. The sequence is that of Histidinol-phosphate aminotransferase from Aliivibrio fischeri (strain MJ11) (Vibrio fischeri).